The sequence spans 366 residues: Phospho-N-acetylmuramoyl-pentapeptide-transferase (366 aa).

A run of 10 helical transmembrane segments spans residues 27–47 (AALF…INSL), 71–91 (TPTM…LLWA), 93–113 (LSNV…AIGF), 134–154 (LGIE…TALA), 174–194 (FLIN…VGAG), 205–225 (GLAI…AYLA), 245–265 (LAVV…FNAP), 268–288 (AIFM…TVAV), 294–314 (IVMA…IIQV), and 343–363 (QVVI…LSTL).

The protein belongs to the glycosyltransferase 4 family. MraY subfamily. Mg(2+) is required as a cofactor.

The protein resides in the cell inner membrane. The enzyme catalyses UDP-N-acetyl-alpha-D-muramoyl-L-alanyl-gamma-D-glutamyl-meso-2,6-diaminopimeloyl-D-alanyl-D-alanine + di-trans,octa-cis-undecaprenyl phosphate = di-trans,octa-cis-undecaprenyl diphospho-N-acetyl-alpha-D-muramoyl-L-alanyl-D-glutamyl-meso-2,6-diaminopimeloyl-D-alanyl-D-alanine + UMP. It functions in the pathway cell wall biogenesis; peptidoglycan biosynthesis. Functionally, catalyzes the initial step of the lipid cycle reactions in the biosynthesis of the cell wall peptidoglycan: transfers peptidoglycan precursor phospho-MurNAc-pentapeptide from UDP-MurNAc-pentapeptide onto the lipid carrier undecaprenyl phosphate, yielding undecaprenyl-pyrophosphoryl-MurNAc-pentapeptide, known as lipid I. This chain is Phospho-N-acetylmuramoyl-pentapeptide-transferase, found in Rhizobium etli (strain ATCC 51251 / DSM 11541 / JCM 21823 / NBRC 15573 / CFN 42).